A 698-amino-acid polypeptide reads, in one-letter code: Protein arginine N-methyltransferase 7 (698 aa).

2 consecutive SAM-dependent MTase PRMT-type domains span residues 14–357 and 366–698; these read QNTW…YSLW and EKPA…EKSE.

This sequence belongs to the class I-like SAM-binding methyltransferase superfamily. Protein arginine N-methyltransferase family. PRMT7 subfamily.

In terms of biological role, essential arginine methyltransferase that can both catalyze the formation of omega-N monomethylarginine (MMA) and symmetrical dimethylarginine (sDMA). Specifically mediates the symmetrical dimethylation of arginine residues in the small nuclear ribonucleoproteins SmD1 and SmD3. This Drosophila mojavensis (Fruit fly) protein is Protein arginine N-methyltransferase 7 (Art7).